The sequence spans 248 residues: Phosphate import ATP-binding protein PstB (248 aa).

An ABC transporter domain is found at 1–243; the sequence is MAVNDVNVFY…PQHNLTQGYI (243 aa). 33–40 lines the ATP pocket; sequence GPSGCGKS.

This sequence belongs to the ABC transporter superfamily. Phosphate importer (TC 3.A.1.7) family. In terms of assembly, the complex is composed of two ATP-binding proteins (PstB), two transmembrane proteins (PstC and PstA) and a solute-binding protein (PstS).

It is found in the cell inner membrane. It catalyses the reaction phosphate(out) + ATP + H2O = ADP + 2 phosphate(in) + H(+). In terms of biological role, part of the ABC transporter complex PstSACB involved in phosphate import. Responsible for energy coupling to the transport system. In Rhodospirillum rubrum (strain ATCC 11170 / ATH 1.1.1 / DSM 467 / LMG 4362 / NCIMB 8255 / S1), this protein is Phosphate import ATP-binding protein PstB.